Consider the following 473-residue polypeptide: Probable serine/threonine-protein kinase glkA (473 aa).

The segment at 1 to 84 is disordered; sequence MTIPTDNNSS…QSSSTATVNS (84 aa). Residues 7–84 are compositionally biased toward low complexity; that stretch reads NNSSNNKGYN…QSSSTATVNS (78 aa). In terms of domain architecture, Protein kinase spans 91 to 366; it reads YEIIKQVGQG…IDEIIAHPFL (276 aa). Residues 97–105 and Lys119 contribute to the ATP site; that span reads VGQGTFGKV. Residue Asp208 is the Proton acceptor of the active site. Disordered stretches follow at residues 389 to 418 and 437 to 473; these read GKSSLTTNSTSSSSTTANMTSLASSSSNNK and SSNLKSIDNSNNGKSSSSSNNIPSLNNSNNGVITNTI. Residues 442 to 466 are compositionally biased toward low complexity; the sequence is SIDNSNNGKSSSSSNNIPSLNNSNN.

Belongs to the protein kinase superfamily. CMGC Ser/Thr protein kinase family. GSK-3 subfamily.

It catalyses the reaction L-seryl-[tau protein] + ATP = O-phospho-L-seryl-[tau protein] + ADP + H(+). It carries out the reaction L-threonyl-[tau protein] + ATP = O-phospho-L-threonyl-[tau protein] + ADP + H(+). The sequence is that of Probable serine/threonine-protein kinase glkA (glkA) from Dictyostelium discoideum (Social amoeba).